Reading from the N-terminus, the 375-residue chain is GTPase HflX (375 aa).

Residues P194–K371 form the Hflx-type G domain. Residues G200–T207, F225–T229, D246–G249, N314–D317, and S349–K351 each bind GTP. Positions 207 and 227 each coordinate Mg(2+).

This sequence belongs to the TRAFAC class OBG-HflX-like GTPase superfamily. HflX GTPase family. As to quaternary structure, monomer. Associates with the 50S ribosomal subunit. Requires Mg(2+) as cofactor.

The protein localises to the cytoplasm. Functionally, GTPase that associates with the 50S ribosomal subunit and may have a role during protein synthesis or ribosome biogenesis. This chain is GTPase HflX, found in Hyperthermus butylicus (strain DSM 5456 / JCM 9403 / PLM1-5).